Consider the following 462-residue polypeptide: Glutamate--tRNA ligase 2 (462 aa).

Residues 8–18 carry the 'HIGH' region motif; the sequence is PSPTGYLHIGG. Residues 236–240 carry the 'KMSKS' region motif; sequence KLSKR. K239 lines the ATP pocket.

It belongs to the class-I aminoacyl-tRNA synthetase family. Glutamate--tRNA ligase type 1 subfamily. In terms of assembly, monomer.

The protein resides in the cytoplasm. It carries out the reaction tRNA(Glu) + L-glutamate + ATP = L-glutamyl-tRNA(Glu) + AMP + diphosphate. Functionally, catalyzes the attachment of glutamate to tRNA(Glu) in a two-step reaction: glutamate is first activated by ATP to form Glu-AMP and then transferred to the acceptor end of tRNA(Glu). The protein is Glutamate--tRNA ligase 2 of Nitratiruptor sp. (strain SB155-2).